Consider the following 205-residue polypeptide: Bacterial microcompartment protein trimer-1 (205 aa).

The segment at 1–20 is disordered; that stretch reads MDHAPERFDATPPAGEPDRP. 2 BMC domains span residues 21-106 and 120-204; these read ALGV…RFLD and SVII…GRLF.

This sequence belongs to the bacterial microcompartments protein family. As to quaternary structure, homotrimerizes to form a pseudohexamer. Unlike its paralogs BMC-T2 and BMC-T3, the pseudohexamers do not stack. The concave side faces outward, with the N- and C-terminii exposed to the cytoplasm.

It localises to the bacterial microcompartment. Its function is as follows. A minor component of the bacterial microcompartment (BMC) shell. Expression of 5 proteins in E.coli (BMC-H (Hoch_5815), BMC-P (Hoch_5814), and 3 BMC-T (Hoch_5812, Hoch_5816, Hoch_3341)) forms 40 nm artificial BMCs with a molecular mass of 6.5 MDa. This protein does not form stacked pseudohexamers in the BMC. There are 20 BMC-T pseudohexamers per BMC, composed of mixed BMC-T1, BMC-T2 and BMC-T3. The shell facets are 20-30 Angstroms thick, with 1 of BMC-T trimers protruding to the exterior. This chain is Bacterial microcompartment protein trimer-1, found in Haliangium ochraceum (strain DSM 14365 / JCM 11303 / SMP-2).